Here is a 485-residue protein sequence, read N- to C-terminus: Aspartyl/glutamyl-tRNA(Asn/Gln) amidotransferase subunit B (485 aa).

Belongs to the GatB/GatE family. GatB subfamily. Heterotrimer of A, B and C subunits.

The catalysed reaction is L-glutamyl-tRNA(Gln) + L-glutamine + ATP + H2O = L-glutaminyl-tRNA(Gln) + L-glutamate + ADP + phosphate + H(+). It carries out the reaction L-aspartyl-tRNA(Asn) + L-glutamine + ATP + H2O = L-asparaginyl-tRNA(Asn) + L-glutamate + ADP + phosphate + 2 H(+). Its function is as follows. Allows the formation of correctly charged Asn-tRNA(Asn) or Gln-tRNA(Gln) through the transamidation of misacylated Asp-tRNA(Asn) or Glu-tRNA(Gln) in organisms which lack either or both of asparaginyl-tRNA or glutaminyl-tRNA synthetases. The reaction takes place in the presence of glutamine and ATP through an activated phospho-Asp-tRNA(Asn) or phospho-Glu-tRNA(Gln). The chain is Aspartyl/glutamyl-tRNA(Asn/Gln) amidotransferase subunit B from Methylacidiphilum infernorum (isolate V4) (Methylokorus infernorum (strain V4)).